The sequence spans 504 residues: D-alanine--D-alanyl carrier protein ligase (504 aa).

Position 152-153 (152-153) interacts with ATP; it reads TS. Aspartate 197 lines the D-alanine pocket. 292–297 contacts ATP; sequence NTYGPT. D-alanine is bound at residue valine 301. ATP contacts are provided by residues aspartate 383, 394–397, and lysine 492; that span reads YNGR. Lysine 492 lines the D-alanine pocket.

This sequence belongs to the ATP-dependent AMP-binding enzyme family. DltA subfamily.

It localises to the cytoplasm. It carries out the reaction holo-[D-alanyl-carrier protein] + D-alanine + ATP = D-alanyl-[D-alanyl-carrier protein] + AMP + diphosphate. Its pathway is cell wall biogenesis; lipoteichoic acid biosynthesis. In terms of biological role, catalyzes the first step in the D-alanylation of lipoteichoic acid (LTA), the activation of D-alanine and its transfer onto the D-alanyl carrier protein (Dcp) DltC. In an ATP-dependent two-step reaction, forms a high energy D-alanyl-AMP intermediate, followed by transfer of the D-alanyl residue as a thiol ester to the phosphopantheinyl prosthetic group of the Dcp. D-alanylation of LTA plays an important role in modulating the properties of the cell wall in Gram-positive bacteria, influencing the net charge of the cell wall. This chain is D-alanine--D-alanyl carrier protein ligase, found in Bacillus mycoides (strain KBAB4) (Bacillus weihenstephanensis).